The chain runs to 79 residues: uncharacterized protein (79 aa).

Belongs to the asfivirus D79L family.

This is an uncharacterized protein from Ornithodoros (relapsing fever ticks).